We begin with the raw amino-acid sequence, 232 residues long: Large ribosomal subunit protein uL1 (232 aa).

It belongs to the universal ribosomal protein uL1 family. Part of the 50S ribosomal subunit.

Its function is as follows. Binds directly to 23S rRNA. The L1 stalk is quite mobile in the ribosome, and is involved in E site tRNA release. Functionally, protein L1 is also a translational repressor protein, it controls the translation of the L11 operon by binding to its mRNA. The chain is Large ribosomal subunit protein uL1 from Xanthomonas axonopodis pv. citri (strain 306).